A 375-amino-acid chain; its full sequence is All-trans-retinol dehydrogenase [NAD(+)] ADH1B (375 aa).

At S2 the chain carries N-acetylserine. Residue S23 is modified to Phosphoserine. Y35 carries the phosphotyrosine modification. C47, H68, C98, C101, C104, C112, and C175 together coordinate Zn(2+). Residues 200 to 205 (GLGGVG), D224, K229, 293 to 295 (VGV), and R370 each bind NAD(+).

The protein belongs to the zinc-containing alcohol dehydrogenase family. Dimer of identical or non-identical chains of three types; alpha, beta and gamma. It depends on Zn(2+) as a cofactor.

The protein resides in the cytoplasm. It carries out the reaction all-trans-retinol + NAD(+) = all-trans-retinal + NADH + H(+). The catalysed reaction is all-trans-4-hydroxyretinol + NAD(+) = all-trans-4-hydroxyretinal + NADH + H(+). The enzyme catalyses all-trans-4-oxoretinol + NAD(+) = all-trans-4-oxoretinal + NADH + H(+). Functionally, catalyzes the NAD-dependent oxidation of all-trans-retinol and its derivatives such as all-trans-4-hydroxyretinol and may participate in retinoid metabolism. In vitro can also catalyze the NADH-dependent reduction of all-trans-retinal and its derivatives such as all-trans-4-oxoretinal. Catalyzes in the oxidative direction with higher efficiency. Has the same affinity for all-trans-4-hydroxyretinol and all-trans-4-oxoretinal. The chain is All-trans-retinol dehydrogenase [NAD(+)] ADH1B from Homo sapiens (Human).